A 203-amino-acid chain; its full sequence is MIVKICGLKKSVDVKAAVENGADMIGFVFAKSKRQVTIEQAHQLAKNIPPNIKKVGVFVNPTEDELTAAIKGVPLDIVQLHGQEPTEQADRTDAEVIKAFPVKEGKLPNNINDYSNAYILLDAPAEEYEGGSGKTFDWDKVNSDLLIKNKLIIAGGLNVENVKEAINRFEPYAVDISSGVETNGEKDPEKIKIFIKTAKGVGK.

The protein belongs to the TrpF family.

The enzyme catalyses N-(5-phospho-beta-D-ribosyl)anthranilate = 1-(2-carboxyphenylamino)-1-deoxy-D-ribulose 5-phosphate. It participates in amino-acid biosynthesis; L-tryptophan biosynthesis; L-tryptophan from chorismate: step 3/5. This Listeria innocua serovar 6a (strain ATCC BAA-680 / CLIP 11262) protein is N-(5'-phosphoribosyl)anthranilate isomerase.